The primary structure comprises 184 residues: Peptide deformylase (184 aa).

Fe cation contacts are provided by Cys-98 and His-140. The active site involves Glu-141. Position 144 (His-144) interacts with Fe cation.

The protein belongs to the polypeptide deformylase family. Requires Fe(2+) as cofactor.

It carries out the reaction N-terminal N-formyl-L-methionyl-[peptide] + H2O = N-terminal L-methionyl-[peptide] + formate. Removes the formyl group from the N-terminal Met of newly synthesized proteins. Requires at least a dipeptide for an efficient rate of reaction. N-terminal L-methionine is a prerequisite for activity but the enzyme has broad specificity at other positions. The chain is Peptide deformylase from Bacteroides thetaiotaomicron (strain ATCC 29148 / DSM 2079 / JCM 5827 / CCUG 10774 / NCTC 10582 / VPI-5482 / E50).